The sequence spans 517 residues: DNA-binding protein Ikaros (517 aa).

Residues 1–71 (MDVDEGQDMS…QSDEENGRAC (71 aa)) are disordered. A Phosphoserine modification is found at Ser-13. At Thr-23 the chain carries Phosphothreonine. Over residues 37 to 47 (LSTTSGAQQNS) the composition is skewed to polar residues. A Glycyl lysine isopeptide (Lys-Gly) (interchain with G-Cter in SUMO) cross-link involves residue Lys-58. Ser-63 and Ser-101 each carry phosphoserine. Residues 117 to 139 (LKCDICGIVCIGPNVLMVHKRSH) form a C2H2-type 1 zinc finger. Thr-140 carries the phosphothreonine modification. The C2H2-type 2 zinc finger occupies 144-166 (FQCNQCGASFTQKGNLLRHIKLH). The required for both high-affinity DNA binding and pericentromeric heterochromatin localization stretch occupies residues 153–162 (FTQKGNLLRH). Ser-167 is subject to Phosphoserine. The C2H2-type 3 zinc-finger motif lies at 172-194 (FKCHLCNYACRRRDALTGHLRTH). A required for both high-affinity DNA binding and pericentromeric heterochromatin localization region spans residues 179–194 (YACRRRDALTGHLRTH). Phosphoserine is present on Ser-195. A C2H2-type 4 zinc finger spans residues 200–223 (HKCGYCGRSYKQRSSLEEHKERCH). Lys-239 is covalently cross-linked (Glycyl lysine isopeptide (Lys-Gly) (interchain with G-Cter in SUMO)). Phosphoserine occurs at positions 259, 287, 293, 357, 360, 384, 386, 388, and 392. Residues 376–400 (SVSSEREASPSNSCQDSTDTESNAE) are disordered. Position 393 is a phosphothreonine (Thr-393). Residues Ser-397 and Ser-440 each carry the phosphoserine modification. 2 consecutive C2H2-type zinc fingers follow at residues 457 to 479 (YKCEHCRVLFLDHVMYTIHMGCH) and 488 to 512 (FECNMCGYHSQDRYEFSSHITRGEH). The segment at 463-466 (RVLF) is required for binding PP1CC.

It belongs to the Ikaros C2H2-type zinc-finger protein family. As to quaternary structure, heterodimer with other IKAROS family members. Interacts with IKZF4 and IKZF5. Component of the chromatin-remodeling NuRD repressor complex which includes at least HDAC1, HDAC2, RBBP4, RBBP7, IKZF1, MTA2, MBD2, MBD3, MTA1L1, CHD3 and CHD4. Interacts directly with the CHD4 component of the NuRD complex. Interacts directly with SMARCA4; the interaction associates IKFZ1 with the BAF complex. Interacts with SUMO1; the interaction sumoylates IKAROS, promoted by PIAS2 and PIAS3. Interacts with PIAS2 (isoform alpha); the interaction promotes sumoylation and reduces transcription repression. Interacts, to a lesser extent, with PIAS3. Interacts with PPP1CC; the interaction targets PPP1CC to pericentromeric heterochromatin, dephosphorylates IKAROS, stabilizes it and prevents it from degradation. Interacts with IKZF3. Phosphorylation at Ser-357 and Ser-360 downstream of SYK induces nuclear translocation. Phosphorylation controls cell-cycle progression from late G(1) stage to S stage. Hyperphosphorylated during G2/M phase. Dephosphorylated state during late G(1) phase. Phosphorylation on Thr-140 is required for DNA and pericentromeric location during mitosis. CK2 is the main kinase, in vitro. GSK3 and CDK may also contribute to phosphorylation of the C-terminal serine and threonine residues. Phosphorylation on these C-terminal residues reduces the DNA-binding ability. Phosphorylation/dephosphorylation events on Ser-13 and Ser-293 regulate TDT expression during thymocyte differentiation. Dephosphorylation by protein phosphatase 1 regulates stability and pericentromeric heterochromatin location. Phosphorylated in both lymphoid and non-lymphoid tissues. Post-translationally, sumoylated. Simultaneous sumoylation on the 2 sites results in a loss of both HDAC-dependent and HDAC-independent repression. Has no effect on pericentromeric heterochromatin location. Desumoylated by SENP1. In terms of processing, polyubiquitinated. Strongly expressed in T-cells and their progenitors,in B-cells, and in all early embryonic retinal progenitor cells (RPCs). Isoforms V and VI are the predominant isoforms in lymphocytes.

Its subcellular location is the nucleus. The protein resides in the cytoplasm. Transcription regulator of hematopoietic cell differentiation. Binds gamma-satellite DNA. Binds with higher affinity to gamma satellite A. Plays a role in the development of lymphocytes, B- and T-cells. Binds and activates the enhancer (delta-A element) of the CD3-delta gene. Repressor of the TDT (terminal deoxynucleotidyltransferase) gene during thymocyte differentiation. Regulates transcription through association with both HDAC-dependent and HDAC-independent complexes. Targets the 2 chromatin-remodeling complexes, NuRD and BAF (SWI/SNF), in a single complex (PYR complex), to the beta-globin locus in adult erythrocytes. Increases normal apoptosis in adult erythroid cells. Confers early temporal competence to retinal progenitor cells (RPCs). Function is isoform-specific and is modulated by dominant-negative inactive isoforms. This Mus musculus (Mouse) protein is DNA-binding protein Ikaros (Ikzf1).